We begin with the raw amino-acid sequence, 154 residues long: Endoribonuclease YbeY (154 aa).

Zn(2+) contacts are provided by histidine 116, histidine 120, and histidine 126.

Belongs to the endoribonuclease YbeY family. Zn(2+) is required as a cofactor.

The protein localises to the cytoplasm. Functionally, single strand-specific metallo-endoribonuclease involved in late-stage 70S ribosome quality control and in maturation of the 3' terminus of the 16S rRNA. This Chromohalobacter salexigens (strain ATCC BAA-138 / DSM 3043 / CIP 106854 / NCIMB 13768 / 1H11) protein is Endoribonuclease YbeY.